Reading from the N-terminus, the 139-residue chain is Ribonuclease P protein component (139 aa).

The protein belongs to the RnpA family. Consists of a catalytic RNA component (M1 or rnpB) and a protein subunit.

The catalysed reaction is Endonucleolytic cleavage of RNA, removing 5'-extranucleotides from tRNA precursor.. Functionally, RNaseP catalyzes the removal of the 5'-leader sequence from pre-tRNA to produce the mature 5'-terminus. It can also cleave other RNA substrates such as 4.5S RNA. The protein component plays an auxiliary but essential role in vivo by binding to the 5'-leader sequence and broadening the substrate specificity of the ribozyme. The chain is Ribonuclease P protein component from Paraburkholderia xenovorans (strain LB400).